A 414-amino-acid chain; its full sequence is DNA primase large subunit PriL (414 aa).

[4Fe-4S] cluster is bound by residues Cys251, Cys352, Cys370, and Cys376.

It belongs to the eukaryotic-type primase large subunit family. Heterodimer of a small subunit (PriS) and a large subunit (PriL). Requires [4Fe-4S] cluster as cofactor.

Its function is as follows. Regulatory subunit of DNA primase, an RNA polymerase that catalyzes the synthesis of short RNA molecules used as primers for DNA polymerase during DNA replication. Stabilizes and modulates the activity of the small subunit, increasing the rate of DNA synthesis, and conferring RNA synthesis capability. The DNA polymerase activity may enable DNA primase to also catalyze primer extension after primer synthesis. May also play a role in DNA repair. This Methanocaldococcus jannaschii (strain ATCC 43067 / DSM 2661 / JAL-1 / JCM 10045 / NBRC 100440) (Methanococcus jannaschii) protein is DNA primase large subunit PriL.